We begin with the raw amino-acid sequence, 328 residues long: Putative glycosyltransferase 41 (328 aa).

This sequence belongs to the glycosyltransferase group 1 family. Glycosyltransferase 4 subfamily.

The chain is Putative glycosyltransferase 41 (SIFV0041) from Sulfolobus islandicus filamentous virus (isolate Iceland/Hveragerdi) (SIFV).